A 353-amino-acid polypeptide reads, in one-letter code: Serine proteinase inhibitor 1 (353 aa).

It belongs to the serpin family. Poxviruses subfamily.

The protein resides in the host cytoplasm. Plays a role in mediating viral host range. May act to inhibit a caspase independent form of apoptosis to allow efficient virus replication in infected cells. The polypeptide is Serine proteinase inhibitor 1 (OPG208) (Vaccinia virus (strain Copenhagen) (VACV)).